Reading from the N-terminus, the 218-residue chain is 3-phospho-D-glycerate guanylyltransferase (218 aa).

The protein belongs to the CofC family.

The enzyme catalyses (2R)-3-phosphoglycerate + GTP + H(+) = 3-[(R)-glyceryl]-diphospho-5'-guanosine + diphosphate. Its pathway is cofactor biosynthesis; coenzyme F420 biosynthesis. Guanylyltransferase that catalyzes the activation of (2R)-3-phosphoglycerate (3PG) as 3-[(R)-glyceryl]-diphospho-5'-guanosine, via the condensation of 3PG with GTP. It is involved in the biosynthesis of a derivative of the hydride carrier cofactor coenzyme F420, 3PG-F420. This chain is 3-phospho-D-glycerate guanylyltransferase, found in Phenylobacterium zucineum (strain HLK1).